Here is a 222-residue protein sequence, read N- to C-terminus: Probable transaldolase (222 aa).

Lys91 functions as the Schiff-base intermediate with substrate in the catalytic mechanism.

Belongs to the transaldolase family. Type 3B subfamily.

The protein localises to the cytoplasm. It carries out the reaction D-sedoheptulose 7-phosphate + D-glyceraldehyde 3-phosphate = D-erythrose 4-phosphate + beta-D-fructose 6-phosphate. It participates in carbohydrate degradation; pentose phosphate pathway; D-glyceraldehyde 3-phosphate and beta-D-fructose 6-phosphate from D-ribose 5-phosphate and D-xylulose 5-phosphate (non-oxidative stage): step 2/3. Transaldolase is important for the balance of metabolites in the pentose-phosphate pathway. The protein is Probable transaldolase of Chlorobium limicola (strain DSM 245 / NBRC 103803 / 6330).